The primary structure comprises 413 residues: Alpha-1-antitrypsin 1-2 (413 aa).

The signal sequence occupies residues 1-24; sequence MTPSISWGLLLLAGLCCMVPSFLA. N-linked (GlcNAc...) asparagine glycosylation is found at asparagine 64, asparagine 101, and asparagine 265. The segment at 368–387 is RCL; sequence AATVFEAVPMSMPPILRFDH.

Belongs to the serpin family.

Its subcellular location is the secreted. Inhibitor of serine proteases. Its primary target is elastase, but it also has a moderate affinity for plasmin and thrombin. The sequence is that of Alpha-1-antitrypsin 1-2 (Serpina1b) from Mus musculus (Mouse).